Reading from the N-terminus, the 451-residue chain is Phosphoglucosamine mutase (451 aa).

Residue serine 101 is the Phosphoserine intermediate of the active site. The Mg(2+) site is built by serine 101, aspartate 240, aspartate 242, and aspartate 244. Position 101 is a phosphoserine (serine 101).

This sequence belongs to the phosphohexose mutase family. Mg(2+) is required as a cofactor. Post-translationally, activated by phosphorylation.

It catalyses the reaction alpha-D-glucosamine 1-phosphate = D-glucosamine 6-phosphate. In terms of biological role, catalyzes the conversion of glucosamine-6-phosphate to glucosamine-1-phosphate. This Thioalkalivibrio sulfidiphilus (strain HL-EbGR7) protein is Phosphoglucosamine mutase.